Reading from the N-terminus, the 3640-residue chain is Serine/threonine-protein kinase SMG1 (3640 aa).

The segment covering 21-34 has biased composition (polar residues); it reads NDWQPRSDSLSASQ. The tract at residues 21 to 41 is disordered; sequence NDWQPRSDSLSASQDGVKCSV. An FAT domain is found at 1495-1843; sequence YCHSGKCELA…LYPAIVGSIS (349 aa). An HEAT repeat occupies 1794 to 1829; the sequence is APWRGIIPQLFSRLNHPEAYIRQSICSLLCRVAQDS. The disordered stretch occupies residues 1870-1890; that stretch reads GLCGGESETGSGPTSQESSRG. Residues 1874–1887 show a composition bias toward low complexity; it reads GESETGSGPTSQES. A PI3K/PI4K catalytic domain is found at 2102–2441; that stretch reads VGNTITILPT…MERDITRSLF (340 aa). Residues 2108 to 2114 are G-loop; sequence ILPTKTK. The segment at 2310–2318 is catalytic loop; the sequence is GLGDRHLDN. Positions 2330–2354 are activation loop; it reads HIDYNVCFEKGKSLRVPEKVPFRMT. The region spanning 3608-3640 is the FATC domain; sequence RRMSVTEQVDYVIKEATNVDNLAQLYEGWTAWV.

The protein belongs to the PI3/PI4-kinase family. Mn(2+) serves as cofactor. Post-translationally, autophosphorylated.

Its subcellular location is the nucleus. The protein resides in the cytoplasm. The catalysed reaction is L-seryl-[protein] + ATP = O-phospho-L-seryl-[protein] + ADP + H(+). The enzyme catalyses L-threonyl-[protein] + ATP = O-phospho-L-threonyl-[protein] + ADP + H(+). Functionally, serine/threonine protein kinase involved in both mRNA surveillance and genotoxic stress response pathways. Recognizes the substrate consensus sequence [ST]-Q. Plays a central role in nonsense-mediated decay (NMD) of mRNAs containing premature stop codons by phosphorylating UPF1/RENT1. In Danio rerio (Zebrafish), this protein is Serine/threonine-protein kinase SMG1.